Reading from the N-terminus, the 728-residue chain is Catalase-peroxidase (728 aa).

An N-terminal signal peptide occupies residues 1–16 (MDNPTDSAGKCPVAHG). Positions 1-26 (MDNPTDSAGKCPVAHGNTPRSRSNRD) are disordered. A cross-link (tryptophyl-tyrosyl-methioninium (Trp-Tyr) (with M-244)) is located at residues 96–218 (WHSAGTYRIT…LGAVQMGFIY (123 aa)). Catalysis depends on His-97, which acts as the Proton acceptor. A cross-link (tryptophyl-tyrosyl-methioninium (Tyr-Met) (with W-96)) is located at residues 218-244 (YVNPEGPNGNSDPLASARDIRETFARM). His-259 is a binding site for heme b.

This sequence belongs to the peroxidase family. Peroxidase/catalase subfamily. In terms of assembly, homodimer or homotetramer. Requires heme b as cofactor. Formation of the three residue Trp-Tyr-Met cross-link is important for the catalase, but not the peroxidase activity of the enzyme.

It catalyses the reaction H2O2 + AH2 = A + 2 H2O. The enzyme catalyses 2 H2O2 = O2 + 2 H2O. Functionally, bifunctional enzyme with both catalase and broad-spectrum peroxidase activity. This Rhizobium leguminosarum bv. phaseoli protein is Catalase-peroxidase.